Reading from the N-terminus, the 1123-residue chain is uncharacterized protein (1123 aa).

8 disordered regions span residues 136–229 (LGES…PKLT), 262–471 (MLQY…LNQH), 483–514 (LSSIPINNKENNNNNNNRDNRDKDICTTSPNL), 527–609 (KKIN…QSDD), 629–769 (SILC…NNIS), 782–812 (LKPKPLHLSSPSIPTTSPDAPYRLPSLNSSS), 835–1005 (ITNN…GESN), and 1070–1099 (NNNNNNNNNNNNNNNNNNNNNNNNNNNNNI). Positions 166–185 (GGNGGNSGTNGDGDDGGCSL) are enriched in gly residues. The segment covering 190 to 199 (DENDYEDGMV) has biased composition (acidic residues). Residues 211 to 223 (SGDGGGGGGGGGD) show a composition bias toward gly residues. The span at 262–322 (MLQYQQQQQQ…TTTTHSNNSN (61 aa)) shows a compositional bias: low complexity. Residues 329 to 343 (PLNNSNSNIHFLTNQ) show a composition bias toward polar residues. Composition is skewed to low complexity over residues 344–387 (QNSD…SNLN), 397–464 (STST…SSSS), 489–499 (NNKENNNNNNN), 527–548 (KKINSNNNNNNNNSNNNNNISS), and 563–585 (HQQQQQQQQQQQQQQQQHQQQHQ). Over residues 590 to 604 (SKSSSELQVPSSNYH) the composition is skewed to polar residues. Positions 632-646 (CKDDSKTNTNKDKDN) are enriched in basic and acidic residues. Low complexity-rich tracts occupy residues 647–707 (NNSN…INNN) and 727–769 (SVSS…NNIS). The segment covering 790–799 (SSPSIPTTSP) has biased composition (polar residues). 2 stretches are compositionally biased toward low complexity: residues 835–984 (ITNN…NNNI) and 1070–1098 (NNNNNNNNNNNNNNNNNNNNNNNNNNNNN).

This is an uncharacterized protein from Dictyostelium discoideum (Social amoeba).